Consider the following 366-residue polypeptide: Nucleoporin SEH1 (366 aa).

WD repeat units follow at residues 18 to 57 (AHRD…NWRR), 63 to 104 (CHGG…TEKD), 111 to 152 (QWIR…RIYE), 161 to 209 (RWNL…VIYE), 226 to 267 (DMPC…TAIL), and 290 to 329 (GDQR…QWVK).

It belongs to the WD repeat SEC13 family. As to quaternary structure, component of the nuclear pore complex (NPC). Probably part of the GATOR complex.

It is found in the nucleus. The protein localises to the nuclear pore complex. Its subcellular location is the lysosome membrane. In terms of biological role, probable component of the nuclear pore complex (NPC) which is involved in the trafficking of macromolecules between the cytoplasm and nucleus. Its function is as follows. As a component of the GATOR complex may function in the amino acid-sensing branch of the TORC1 signaling pathway. This Caenorhabditis briggsae protein is Nucleoporin SEH1.